The chain runs to 172 residues: Protein-export protein SecB (172 aa).

Belongs to the SecB family. Homotetramer, a dimer of dimers. One homotetramer interacts with 1 SecA dimer.

It localises to the cytoplasm. Functionally, one of the proteins required for the normal export of preproteins out of the cell cytoplasm. It is a molecular chaperone that binds to a subset of precursor proteins, maintaining them in a translocation-competent state. It also specifically binds to its receptor SecA. In Dinoroseobacter shibae (strain DSM 16493 / NCIMB 14021 / DFL 12), this protein is Protein-export protein SecB.